Reading from the N-terminus, the 228-residue chain is MSNFVAEKSIAAVRAVDEVRDGMLVGLGTGSTAAYAVKSLSERIKHGLRITAVATSQATEALALRLAVPLVPFQQLSAVDLTIDGADEIDDRFQAIKGGGGALLREKITESASTRVIIIADSSKLVAQLGKFPLPVEVVPFATEFVRARLSALGARVTVREAGGTPFLTDQGNYILDAALDEIPRPREIAAAITTIPGVLEHGLFLDEIDTIMIARGDMVEVRHRGEA.

Substrate is bound by residues 29-32 (TGST), 84-87 (DGAD), and 97-100 (KGGG). Residue Glu106 is the Proton acceptor of the active site. Substrate is bound at residue Lys124.

The protein belongs to the ribose 5-phosphate isomerase family. Homodimer.

The catalysed reaction is aldehydo-D-ribose 5-phosphate = D-ribulose 5-phosphate. It functions in the pathway carbohydrate degradation; pentose phosphate pathway; D-ribose 5-phosphate from D-ribulose 5-phosphate (non-oxidative stage): step 1/1. In terms of biological role, catalyzes the reversible conversion of ribose-5-phosphate to ribulose 5-phosphate. This chain is Ribose-5-phosphate isomerase A, found in Sphingopyxis alaskensis (strain DSM 13593 / LMG 18877 / RB2256) (Sphingomonas alaskensis).